The primary structure comprises 566 residues: Cytokine-like nuclear factor N-PAC (566 aa).

The 62-residue stretch at 9 to 70 (VNDLVWAKMK…ETQIKPYLQF (62 aa)) folds into the PWWP domain. Disordered stretches follow at residues 127–147 (VASG…NTTT) and 206–234 (MLDD…SSLD). A dehydrogenase domain region spans residues 274 to 566 (RNIKASQLKF…ASAVYVRARF (293 aa)). NAD(+)-binding positions include 284–298 (GFLG…IVKN) and K518.

The protein belongs to the HIBADH-related family. NP60 subfamily. Binds to mononucleosomes. Interacts with male-specific lethal (MSL) histone acetyltransferase complex at least composed of mof, msl-1, msl-2 and msl-3.

The protein resides in the chromosome. Its function is as follows. May have oxidoreductase activity. The sequence is that of Cytokine-like nuclear factor N-PAC from Anopheles gambiae (African malaria mosquito).